Reading from the N-terminus, the 127-residue chain is Small ribosomal subunit protein bS6 (127 aa).

Positions glutamine 104–alanine 127 are disordered. The span at glutamate 107 to alanine 119 shows a compositional bias: basic and acidic residues.

Belongs to the bacterial ribosomal protein bS6 family.

Binds together with bS18 to 16S ribosomal RNA. The chain is Small ribosomal subunit protein bS6 from Coxiella burnetii (strain CbuG_Q212) (Coxiella burnetii (strain Q212)).